A 164-amino-acid chain; its full sequence is Protein phosphatase 1 regulatory subunit 14C (164 aa).

The span at 1-19 shows a compositional bias: gly residues; sequence MSVVTGGGEAAGGTSGGGA. Residues 1-72 form a disordered region; sequence MSVVTGGGEA…QRRHQQGKVT (72 aa). Ser2 is subject to N-acetylserine. Residue Ser25 is modified to Phosphoserine. Arg27 is modified (omega-N-methylarginine). At Ser33 the chain carries Phosphoserine. A compositionally biased stretch (low complexity) spans 50–62; that stretch reads VATVAAAGQVQQQ. Thr72 is modified (phosphothreonine; by ILK1).

The protein belongs to the PP1 inhibitor family. Has over 600-fold higher inhibitory activity when phosphorylated, creating a molecular switch for regulating the phosphorylation status of PPP1CA substrates and smooth muscle contraction. The main inhibitory site appears to be Thr-72.

Its subcellular location is the endomembrane system. Functionally, inhibitor of the PP1 regulatory subunit PPP1CA. The protein is Protein phosphatase 1 regulatory subunit 14C (Ppp1r14c) of Rattus norvegicus (Rat).